Here is a 435-residue protein sequence, read N- to C-terminus: Kynurenine--oxoglutarate transaminase (435 aa).

Substrate-binding residues include Gly46 and Asn198. Lys262 carries the N6-(pyridoxal phosphate)lysine modification. Arg413 contributes to the substrate binding site.

It belongs to the class-I pyridoxal-phosphate-dependent aminotransferase family. In terms of assembly, homodimer. It depends on pyridoxal 5'-phosphate as a cofactor.

The protein localises to the cytoplasm. It catalyses the reaction L-kynurenine + 2-oxoglutarate = kynurenate + L-glutamate + H2O. The catalysed reaction is 3-phenylpyruvate + L-glutamine = 2-oxoglutaramate + L-phenylalanine. It carries out the reaction an S-substituted L-cysteine + H2O = a thiol + pyruvate + NH4(+). It functions in the pathway amino-acid degradation; L-kynurenine degradation; kynurenate from L-kynurenine: step 1/2. In terms of biological role, catalyzes the irreversible transamination of the L-tryptophan metabolite L-kynurenine to form kynurenic acid (KA). Metabolizes the cysteine conjugates of certain halogenated alkenes and alkanes to form reactive metabolites. Catalyzes the beta-elimination of S-conjugates and Se-conjugates of L-(seleno)cysteine, resulting in the cleavage of the C-S or C-Se bond. This Dictyostelium discoideum (Social amoeba) protein is Kynurenine--oxoglutarate transaminase (ccbl).